A 77-amino-acid chain; its full sequence is Acyl carrier protein (77 aa).

Residues 2–77 (SDVADRVKKI…DAVKFISEAS (76 aa)) enclose the Carrier domain. Ser-37 bears the O-(pantetheine 4'-phosphoryl)serine mark.

The protein belongs to the acyl carrier protein (ACP) family. Post-translationally, 4'-phosphopantetheine is transferred from CoA to a specific serine of apo-ACP by AcpS. This modification is essential for activity because fatty acids are bound in thioester linkage to the sulfhydryl of the prosthetic group.

Its subcellular location is the cytoplasm. It functions in the pathway lipid metabolism; fatty acid biosynthesis. Carrier of the growing fatty acid chain in fatty acid biosynthesis. This chain is Acyl carrier protein, found in Ruegeria sp. (strain TM1040) (Silicibacter sp.).